The primary structure comprises 762 residues: Endonuclease MutS2 (762 aa).

Residue 329-336 (GPNTGGKT) participates in ATP binding. Residues 682–757 (LNLIGKDVET…GSGVTVVYLE (76 aa)) enclose the Smr domain.

It belongs to the DNA mismatch repair MutS family. MutS2 subfamily. Homodimer. Binds to stalled ribosomes, contacting rRNA.

In terms of biological role, endonuclease that is involved in the suppression of homologous recombination and thus may have a key role in the control of bacterial genetic diversity. Functionally, acts as a ribosome collision sensor, splitting the ribosome into its 2 subunits. Detects stalled/collided 70S ribosomes which it binds and splits by an ATP-hydrolysis driven conformational change. Acts upstream of the ribosome quality control system (RQC), a ribosome-associated complex that mediates the extraction of incompletely synthesized nascent chains from stalled ribosomes and their subsequent degradation. Probably generates substrates for RQC. The protein is Endonuclease MutS2 of Aquifex aeolicus (strain VF5).